Reading from the N-terminus, the 559-residue chain is Phosphoinositide 3-phosphatase (559 aa).

Residues 120–541 form the Myotubularin phosphatase domain; sequence SWKSFLLENE…SSLRWWSASF (422 aa). Cys342 serves as the catalytic Phosphocysteine intermediate.

The protein belongs to the protein-tyrosine phosphatase family. Non-receptor class myotubularin subfamily.

The protein resides in the cytoplasm. It carries out the reaction a 1,2-diacyl-sn-glycero-3-phospho-(1D-myo-inositol-3-phosphate) + H2O = a 1,2-diacyl-sn-glycero-3-phospho-(1D-myo-inositol) + phosphate. Functionally, lipid phosphatase which dephosphorylates phosphatidylinositol 3-monophosphate (PI3P). Involved in the control of PI3P-dependent signaling and in the maintenance of endosomal system integrity. This is Phosphoinositide 3-phosphatase from Schizosaccharomyces pombe (strain 972 / ATCC 24843) (Fission yeast).